The primary structure comprises 175 residues: MTLILGIDPGSRITGYGIVRDTGRGGCIYVASGCIRTGAGELHERLQIVYRGVREIIQTYGPVTMGIEKVFMAKNADSALKLGQARGAAIVAGAEESLEIAEYTATQVKQAVVGTGAANKEQVQMMVMHMLKLTSKPQIDASDALAIAICHAHTRSSLLPHGLGTARSRGGRLRL.

Residues D8, E68, and D140 contribute to the active site. D8, E68, and D140 together coordinate Mg(2+).

This sequence belongs to the RuvC family. As to quaternary structure, homodimer which binds Holliday junction (HJ) DNA. The HJ becomes 2-fold symmetrical on binding to RuvC with unstacked arms; it has a different conformation from HJ DNA in complex with RuvA. In the full resolvosome a probable DNA-RuvA(4)-RuvB(12)-RuvC(2) complex forms which resolves the HJ. Mg(2+) serves as cofactor.

The protein localises to the cytoplasm. It catalyses the reaction Endonucleolytic cleavage at a junction such as a reciprocal single-stranded crossover between two homologous DNA duplexes (Holliday junction).. Its function is as follows. The RuvA-RuvB-RuvC complex processes Holliday junction (HJ) DNA during genetic recombination and DNA repair. Endonuclease that resolves HJ intermediates. Cleaves cruciform DNA by making single-stranded nicks across the HJ at symmetrical positions within the homologous arms, yielding a 5'-phosphate and a 3'-hydroxyl group; requires a central core of homology in the junction. The consensus cleavage sequence is 5'-(A/T)TT(C/G)-3'. Cleavage occurs on the 3'-side of the TT dinucleotide at the point of strand exchange. HJ branch migration catalyzed by RuvA-RuvB allows RuvC to scan DNA until it finds its consensus sequence, where it cleaves and resolves the cruciform DNA. This is Crossover junction endodeoxyribonuclease RuvC from Pseudomonas fluorescens (strain Pf0-1).